The following is a 697-amino-acid chain: Elongation factor G (697 aa).

Residues 10–290 (THFRNIGIAA…AVVDYLPSPL (281 aa)) enclose the tr-type G domain. Residues 19-26 (AHIDAGKT), 89-93 (DTPGH), and 143-146 (NKMD) each bind GTP.

Belongs to the TRAFAC class translation factor GTPase superfamily. Classic translation factor GTPase family. EF-G/EF-2 subfamily.

It localises to the cytoplasm. In terms of biological role, catalyzes the GTP-dependent ribosomal translocation step during translation elongation. During this step, the ribosome changes from the pre-translocational (PRE) to the post-translocational (POST) state as the newly formed A-site-bound peptidyl-tRNA and P-site-bound deacylated tRNA move to the P and E sites, respectively. Catalyzes the coordinated movement of the two tRNA molecules, the mRNA and conformational changes in the ribosome. The chain is Elongation factor G from Deinococcus deserti (strain DSM 17065 / CIP 109153 / LMG 22923 / VCD115).